We begin with the raw amino-acid sequence, 562 residues long: Probable Xaa-Pro aminopeptidase PEPP (562 aa).

4 residues coordinate Mn(2+): Asp-358, Asp-369, Glu-492, and Glu-532.

The protein belongs to the peptidase M24B family. It depends on Mn(2+) as a cofactor.

It catalyses the reaction Release of any N-terminal amino acid, including proline, that is linked to proline, even from a dipeptide or tripeptide.. In terms of biological role, catalyzes the removal of a penultimate prolyl residue from the N-termini of peptides. The protein is Probable Xaa-Pro aminopeptidase PEPP (PEPP) of Leptosphaeria maculans (strain JN3 / isolate v23.1.3 / race Av1-4-5-6-7-8) (Blackleg fungus).